We begin with the raw amino-acid sequence, 856 residues long: Bifunctional uridylyltransferase/uridylyl-removing enzyme (856 aa).

Residues 1 to 320 (MTLSAAPLQH…YCQVPRVTQH (320 aa)) are uridylyltransferase. The interval 321 to 678 (ISEYFHAVNG…ARLADDHEGL (358 aa)) is uridylyl-removing. In terms of domain architecture, HD spans 439–561 (VDEHILMVVR…VRTPRRLAAL (123 aa)). ACT domains lie at 679-760 (QVLI…LPPQ) and 788-856 (ILSI…ALRI).

This sequence belongs to the GlnD family. Mg(2+) serves as cofactor.

It catalyses the reaction [protein-PII]-L-tyrosine + UTP = [protein-PII]-uridylyl-L-tyrosine + diphosphate. The enzyme catalyses [protein-PII]-uridylyl-L-tyrosine + H2O = [protein-PII]-L-tyrosine + UMP + H(+). Its activity is regulated as follows. Uridylyltransferase (UTase) activity is inhibited by glutamine, while glutamine activates uridylyl-removing (UR) activity. Functionally, modifies, by uridylylation and deuridylylation, the PII regulatory proteins (GlnB and homologs), in response to the nitrogen status of the cell that GlnD senses through the glutamine level. Under low glutamine levels, catalyzes the conversion of the PII proteins and UTP to PII-UMP and PPi, while under higher glutamine levels, GlnD hydrolyzes PII-UMP to PII and UMP (deuridylylation). Thus, controls uridylylation state and activity of the PII proteins, and plays an important role in the regulation of nitrogen assimilation and metabolism. This is Bifunctional uridylyltransferase/uridylyl-removing enzyme from Chromobacterium violaceum (strain ATCC 12472 / DSM 30191 / JCM 1249 / CCUG 213 / NBRC 12614 / NCIMB 9131 / NCTC 9757 / MK).